Reading from the N-terminus, the 68-residue chain is DNA-directed RNA polymerase subunit omega (68 aa).

Belongs to the RNA polymerase subunit omega family. In terms of assembly, the RNAP catalytic core consists of 2 alpha, 1 beta, 1 beta' and 1 omega subunit. When a sigma factor is associated with the core the holoenzyme is formed, which can initiate transcription.

It catalyses the reaction RNA(n) + a ribonucleoside 5'-triphosphate = RNA(n+1) + diphosphate. Its function is as follows. Promotes RNA polymerase assembly. Latches the N- and C-terminal regions of the beta' subunit thereby facilitating its interaction with the beta and alpha subunits. In Neisseria meningitidis serogroup C (strain 053442), this protein is DNA-directed RNA polymerase subunit omega.